A 274-amino-acid chain; its full sequence is Large ribosomal subunit protein uL2 (274 aa).

The disordered stretch occupies residues 221–274 (RGTAMNPVDHPHGGGEGRNFGKHPVTPWGVQTKGKKTRSNKRTDKFIVRRRSKK).

Belongs to the universal ribosomal protein uL2 family. As to quaternary structure, part of the 50S ribosomal subunit. Forms a bridge to the 30S subunit in the 70S ribosome.

Its function is as follows. One of the primary rRNA binding proteins. Required for association of the 30S and 50S subunits to form the 70S ribosome, for tRNA binding and peptide bond formation. It has been suggested to have peptidyltransferase activity; this is somewhat controversial. Makes several contacts with the 16S rRNA in the 70S ribosome. This is Large ribosomal subunit protein uL2 from Yersinia pseudotuberculosis serotype O:1b (strain IP 31758).